A 315-amino-acid polypeptide reads, in one-letter code: 4-hydroxy-3-methylbut-2-enyl diphosphate reductase (315 aa).

C12 provides a ligand contact to [4Fe-4S] cluster. The (2E)-4-hydroxy-3-methylbut-2-enyl diphosphate site is built by H41 and H74. The dimethylallyl diphosphate site is built by H41 and H74. The isopentenyl diphosphate site is built by H41 and H74. C96 is a [4Fe-4S] cluster binding site. (2E)-4-hydroxy-3-methylbut-2-enyl diphosphate is bound at residue H124. Residue H124 participates in dimethylallyl diphosphate binding. H124 contributes to the isopentenyl diphosphate binding site. E126 (proton donor) is an active-site residue. A (2E)-4-hydroxy-3-methylbut-2-enyl diphosphate-binding site is contributed by T167. C197 is a binding site for [4Fe-4S] cluster. 4 residues coordinate (2E)-4-hydroxy-3-methylbut-2-enyl diphosphate: S225, S226, N227, and S269. S225, S226, N227, and S269 together coordinate dimethylallyl diphosphate. Isopentenyl diphosphate is bound by residues S225, S226, N227, and S269.

This sequence belongs to the IspH family. Homodimer. The cofactor is [4Fe-4S] cluster.

It carries out the reaction isopentenyl diphosphate + 2 oxidized [2Fe-2S]-[ferredoxin] + H2O = (2E)-4-hydroxy-3-methylbut-2-enyl diphosphate + 2 reduced [2Fe-2S]-[ferredoxin] + 2 H(+). It catalyses the reaction dimethylallyl diphosphate + 2 oxidized [2Fe-2S]-[ferredoxin] + H2O = (2E)-4-hydroxy-3-methylbut-2-enyl diphosphate + 2 reduced [2Fe-2S]-[ferredoxin] + 2 H(+). Its pathway is isoprenoid biosynthesis; dimethylallyl diphosphate biosynthesis; dimethylallyl diphosphate from (2E)-4-hydroxy-3-methylbutenyl diphosphate: step 1/1. The protein operates within isoprenoid biosynthesis; isopentenyl diphosphate biosynthesis via DXP pathway; isopentenyl diphosphate from 1-deoxy-D-xylulose 5-phosphate: step 6/6. In terms of biological role, catalyzes the conversion of 1-hydroxy-2-methyl-2-(E)-butenyl 4-diphosphate (HMBPP) into a mixture of isopentenyl diphosphate (IPP) and dimethylallyl diphosphate (DMAPP). Acts in the terminal step of the DOXP/MEP pathway for isoprenoid precursor biosynthesis. The chain is 4-hydroxy-3-methylbut-2-enyl diphosphate reductase from Wigglesworthia glossinidia brevipalpis.